A 282-amino-acid chain; its full sequence is Bifunctional protein FolD (282 aa).

Residues 164–166 (GAS), I189, and I230 each bind NADP(+).

It belongs to the tetrahydrofolate dehydrogenase/cyclohydrolase family. Homodimer.

It catalyses the reaction (6R)-5,10-methylene-5,6,7,8-tetrahydrofolate + NADP(+) = (6R)-5,10-methenyltetrahydrofolate + NADPH. The catalysed reaction is (6R)-5,10-methenyltetrahydrofolate + H2O = (6R)-10-formyltetrahydrofolate + H(+). It functions in the pathway one-carbon metabolism; tetrahydrofolate interconversion. In terms of biological role, catalyzes the oxidation of 5,10-methylenetetrahydrofolate to 5,10-methenyltetrahydrofolate and then the hydrolysis of 5,10-methenyltetrahydrofolate to 10-formyltetrahydrofolate. This Campylobacter jejuni subsp. doylei (strain ATCC BAA-1458 / RM4099 / 269.97) protein is Bifunctional protein FolD.